Here is a 693-residue protein sequence, read N- to C-terminus: Elongation factor G (693 aa).

Residues 8–282 (EKTRNIGIMA…AVIDYLPSPL (275 aa)) form the tr-type G domain. GTP is bound by residues 17 to 24 (AHVDAGKT), 81 to 85 (DTPGH), and 135 to 138 (NKMD).

It belongs to the TRAFAC class translation factor GTPase superfamily. Classic translation factor GTPase family. EF-G/EF-2 subfamily.

The protein localises to the cytoplasm. Catalyzes the GTP-dependent ribosomal translocation step during translation elongation. During this step, the ribosome changes from the pre-translocational (PRE) to the post-translocational (POST) state as the newly formed A-site-bound peptidyl-tRNA and P-site-bound deacylated tRNA move to the P and E sites, respectively. Catalyzes the coordinated movement of the two tRNA molecules, the mRNA and conformational changes in the ribosome. This is Elongation factor G from Streptococcus pneumoniae (strain ATCC 700669 / Spain 23F-1).